The primary structure comprises 981 residues: Mediator of RNA polymerase II transcription subunit 5 (981 aa).

This sequence belongs to the Mediator complex subunit 5 family. In terms of assembly, component of the Mediator complex.

It localises to the nucleus. Component of the Mediator complex, a coactivator involved in the regulated transcription of nearly all RNA polymerase II-dependent genes. Mediator functions as a bridge to convey information from gene-specific regulatory proteins to the basal RNA polymerase II transcription machinery. Mediator is recruited to promoters by direct interactions with regulatory proteins and serves as a scaffold for the assembly of a functional preinitiation complex with RNA polymerase II and the general transcription factors. This is Mediator of RNA polymerase II transcription subunit 5 (NUT1) from Scheffersomyces stipitis (strain ATCC 58785 / CBS 6054 / NBRC 10063 / NRRL Y-11545) (Yeast).